We begin with the raw amino-acid sequence, 307 residues long: Recombination-associated protein RdgC (307 aa).

The protein belongs to the RdgC family.

It is found in the cytoplasm. The protein resides in the nucleoid. Its function is as follows. May be involved in recombination. In Colwellia psychrerythraea (strain 34H / ATCC BAA-681) (Vibrio psychroerythus), this protein is Recombination-associated protein RdgC.